Here is a 429-residue protein sequence, read N- to C-terminus: Glutamate-1-semialdehyde 2,1-aminomutase 2 (429 aa).

K268 bears the N6-(pyridoxal phosphate)lysine mark.

This sequence belongs to the class-III pyridoxal-phosphate-dependent aminotransferase family. HemL subfamily. As to quaternary structure, homodimer. Pyridoxal 5'-phosphate serves as cofactor.

It is found in the cytoplasm. The enzyme catalyses (S)-4-amino-5-oxopentanoate = 5-aminolevulinate. It functions in the pathway porphyrin-containing compound metabolism; protoporphyrin-IX biosynthesis; 5-aminolevulinate from L-glutamyl-tRNA(Glu): step 2/2. The chain is Glutamate-1-semialdehyde 2,1-aminomutase 2 from Bacillus velezensis (strain DSM 23117 / BGSC 10A6 / LMG 26770 / FZB42) (Bacillus amyloliquefaciens subsp. plantarum).